Consider the following 322-residue polypeptide: Eukaryotic translation initiation factor 3 subunit I (322 aa).

WD repeat units follow at residues 4–43, 46–85, 141–180, 184–223, and 281–322; these read GHER…RLGT, GHQG…VIAS, MTES…KVVD, DHSA…CLKS, and GHFG…NIFE.

Belongs to the eIF-3 subunit I family. In terms of assembly, component of the eukaryotic translation initiation factor 3 (eIF-3) complex. The eIF-3 complex interacts with pix.

The protein localises to the cytoplasm. In terms of biological role, component of the eukaryotic translation initiation factor 3 (eIF-3) complex, which is involved in protein synthesis of a specialized repertoire of mRNAs and, together with other initiation factors, stimulates binding of mRNA and methionyl-tRNAi to the 40S ribosome. The eIF-3 complex specifically targets and initiates translation of a subset of mRNAs involved in cell proliferation. The sequence is that of Eukaryotic translation initiation factor 3 subunit I from Drosophila yakuba (Fruit fly).